A 182-amino-acid chain; its full sequence is Transmembrane and coiled-coil domain-containing protein 2 (182 aa).

2 helical membrane-spanning segments follow: residues 10–30 (IIIDYLSLSSIWNYLQATLLG) and 50–70 (VQVILGISFLILLGVGMYALW). The stretch at 122 to 149 (GLQEKILKKLQTVENKVKDLEGMIISQK) forms a coiled coil.

Its subcellular location is the membrane. The polypeptide is Transmembrane and coiled-coil domain-containing protein 2 (TMCO2) (Bos taurus (Bovine)).